Consider the following 276-residue polypeptide: Syntaxin-12 (276 aa).

Ser2 bears the N-acetylserine mark. Residues 2-248 (SYGPLDMYRN…RAAYYQKKSR (247 aa)) are Cytoplasmic-facing. The stretch at 33-131 (IQRISQATAQ…RRVSEKEKES (99 aa)) forms a coiled coil. Phosphoserine is present on residues Ser139, Ser142, Ser218, and Ser225. Residues 178–240 (LELIKERETA…ERATEQLQRA (63 aa)) enclose the t-SNARE coiled-coil homology domain. The helical; Anchor for type IV membrane protein transmembrane segment at 249–269 (KKMCILVLVLSVIILILGLII) threads the bilayer. Over 270–276 (WLVYKTK) the chain is Vesicular.

This sequence belongs to the syntaxin family. Interacts with NAPA and SNAP23. Identified in a complex containing STX6, STX12, VAMP4 and VTI1A. Associates with the BLOC-1 complex. Interacts with BLOC1S6. Interacts with GRIPAP1. Forms a complex with GRIP1, GRIA2 and NSG1; controls the intracellular fate of AMPAR and the endosomal sorting of the GRIA2 subunit toward recycling and membrane targeting. Interacts with NSG1. Interacts with TPC1. Interacts (via N-terminus) with VPS13B.

It localises to the endosome membrane. The protein localises to the golgi apparatus membrane. The protein resides in the endomembrane system. Its subcellular location is the early endosome membrane. It is found in the recycling endosome membrane. Its function is as follows. SNARE promoting fusion of transport vesicles with target membranes. Together with SNARE STX6, promotes movement of vesicles from endosomes to the cell membrane, and may therefore function in the endocytic recycling pathway. Through complex formation with GRIP1, GRIA2 and NSG1 controls the intracellular fate of AMPAR and the endosomal sorting of the GRIA2 subunit toward recycling and membrane targeting. The chain is Syntaxin-12 (STX12) from Homo sapiens (Human).